The primary structure comprises 160 residues: Probable transcriptional regulator YgiV (160 aa).

Represses expression of mcbR. The protein is Probable transcriptional regulator YgiV (ygiV) of Escherichia coli O157:H7.